The chain runs to 217 residues: UPF0319 protein HSM_0266 (217 aa).

An N-terminal signal peptide occupies residues 1–21 (MKFSFAALASAMLLTSTAAFA).

This sequence belongs to the UPF0319 family.

This Histophilus somni (strain 2336) (Haemophilus somnus) protein is UPF0319 protein HSM_0266.